A 165-amino-acid polypeptide reads, in one-letter code: Small ribosomal subunit protein uS17m (165 aa).

The protein belongs to the universal ribosomal protein uS17 family. As to quaternary structure, component of the mitochondrial small ribosomal subunit (mt-SSU). Mature N.crassa 74S mitochondrial ribosomes consist of a small (37S) and a large (54S) subunit. The 37S small subunit contains a 16S ribosomal RNA (16S mt-rRNA) and 32 different proteins. The 54S large subunit contains a 23S rRNA (23S mt-rRNA) and 42 different proteins. uS17m interacts with the F(1)-ATPase inhibitor IF(1) dimer.

It is found in the mitochondrion. Functionally, component of the mitochondrial ribosome (mitoribosome), a dedicated translation machinery responsible for the synthesis of mitochondrial genome-encoded proteins, including at least some of the essential transmembrane subunits of the mitochondrial respiratory chain. The mitoribosomes are attached to the mitochondrial inner membrane and translation products are cotranslationally integrated into the membrane. This Neurospora crassa (strain ATCC 24698 / 74-OR23-1A / CBS 708.71 / DSM 1257 / FGSC 987) protein is Small ribosomal subunit protein uS17m (mrps17).